We begin with the raw amino-acid sequence, 160 residues long: MTNTPSDQPLKQVNQRGAARLAAVQALYQMDVGGTGVLEIVAEYEEHRLGKELDGDTYLRADASWFRSIVAGVVRDQRKLDPLIGSALQDDWALSRLDSTVRAILRAGTFEILERKDVPVPVIVTEYVEIAKAFFQDEEPKLVNAVLDRIAKQVRGDQRK.

This sequence belongs to the NusB family.

Involved in transcription antitermination. Required for transcription of ribosomal RNA (rRNA) genes. Binds specifically to the boxA antiterminator sequence of the ribosomal RNA (rrn) operons. In Rhizobium meliloti (strain 1021) (Ensifer meliloti), this protein is Transcription antitermination protein NusB.